We begin with the raw amino-acid sequence, 328 residues long: MGVFRTRFTETFGVEHPIMQGGMQWVGRAEMAAAVANAGGLATLSALTQPSPEALAAEIARCRELTDRPFGVNLTLLPTQKPVPYAEYRAAIIEAGIRVVETAGNDPGEHIAEFRRHGVKVIHKCTAVRHALKAERLGVDAVSIDGFECAGHPGEDDIPGLVLLPAAANRLRVPIIASGGFADGRGLVAALALGADAINMGTRFLATRECPIHPAVKAAIRAADERSTDLIMRSLRNTARVARNAISQEVLAIEARGGAGYADIAALVSGQRGRQVYQQGDTDLGIWSAGMVQGLIDDEPACAELLRDIVEQARQLVRQRLEGMLAGV.

FMN contacts are provided by residues 22–24 (GMQ), threonine 75, lysine 124, alanine 150, 178–180 (SGG), and 201–202 (GT).

It belongs to the nitronate monooxygenase family. Monomer. The cofactor is FMN.

The catalysed reaction is a quinone + NADH + H(+) = a quinol + NAD(+). Functionally, catalyzes the NADH-dependent reduction of a broad spectrum of quinone substrates, generating the corresponding hydroquinones. Highly prefers NADH to NADPH as a reducing substrate. Also displays a small NADH oxidase activity. Does not exhibit nitronate monooxygenase activity; is inactive against propionate 3-nitronate, 3-nitropropionate, nitroethane, 1-nitropropane, 2-nitropropane, and the anionic forms ethylnitronate, propyl-1-nitronate, and propyl-2-nitronate. Has no azoreductase activity since it is not able to reduce the azo dye methyl red with NADH. May be required to maintain an appropriate [NAD(+)]/[NADH] ratio for the catabolism of fatty acids in P.aeruginosa PAO1. This is NADH:quinone reductase from Pseudomonas aeruginosa (strain ATCC 15692 / DSM 22644 / CIP 104116 / JCM 14847 / LMG 12228 / 1C / PRS 101 / PAO1).